The sequence spans 507 residues: Rhomboid protease GluP (507 aa).

5 helical membrane-spanning segments follow: residues 179-199 (FTYL…INGG), 229-249 (IVLH…WSVG), 261-281 (FLLI…VFSP), 283-303 (PSAG…YVAL), and 312-332 (TIGT…FAVS). Serine 288 (nucleophile) is an active-site residue. The active-site Charge relay system is the histidine 339. The next 2 helical transmembrane spans lie at 340 to 360 (IGGL…KAGA) and 365 to 385 (LLSA…GLHS). TPR repeat units follow at residues 424 to 457 (ADLL…EPKD) and 458 to 491 (HASY…KPKE).

This sequence belongs to the peptidase S54 family.

It localises to the cell membrane. It catalyses the reaction Cleaves type-1 transmembrane domains using a catalytic dyad composed of serine and histidine that are contributed by different transmembrane domains.. With respect to regulation, inhibited by dichloroisocoumarin (DCI) and N-p-tosyl-L-phenylalanine chloromethyl ketone (TPCK), but not by other serine protease inhibitors such as sulfonyl fluoride PMSF and 4-(2-aminoethyl)benzenesulfonyl fluoride (AEBSF). In terms of biological role, rhomboid-type serine protease that catalyzes intramembrane proteolysis. Important for normal cell division and sporulation. May act as a glucose exporter. This is Rhomboid protease GluP (gluP) from Bacillus subtilis (strain 168).